Consider the following 167-residue polypeptide: U-scoloptoxin(08)-Er5b (167 aa).

Positions 1–22 (MKTNCEFPLLCLLIVLVANVEG) are cleaved as a signal peptide. The propeptide occupies 23–94 (EVEDTGLKMV…KRLWRNWERR (72 aa)). RLWRNWE repeat units follow at residues 34-40 (RLWRNWE), 61-67 (RLWRNWE), and 86-92 (RLWRNWE). Residue Gln-95 is modified to Pyrrolidone carboxylic acid. The stretch at 107-113 (ELWRNWE) is one RLWRNWE 4; approximate repeat. A propeptide spanning residues 112 to 118 (WEDLKRR) is cleaved from the precursor. Residue Gln-119 is modified to Pyrrolidone carboxylic acid. The RLWRNWE 5 repeat unit spans residues 134 to 140 (RLWRNWE). The propeptide occupies 139–167 (WEDNHATLRKRSADSLSRQKRLGKERGKE). The disordered stretch occupies residues 147-167 (RKRSADSLSRQKRLGKERGKE).

Belongs to the scoloptoxin-08 family. Expressed by the venom gland.

It is found in the secreted. The protein is U-scoloptoxin(08)-Er5b of Ethmostigmus rubripes (Giant centipede).